Here is a 447-residue protein sequence, read N- to C-terminus: Na(+)-translocating NADH-quinone reductase subunit A (447 aa).

It belongs to the NqrA family. In terms of assembly, composed of six subunits; NqrA, NqrB, NqrC, NqrD, NqrE and NqrF.

The enzyme catalyses a ubiquinone + n Na(+)(in) + NADH + H(+) = a ubiquinol + n Na(+)(out) + NAD(+). Its function is as follows. NQR complex catalyzes the reduction of ubiquinone-1 to ubiquinol by two successive reactions, coupled with the transport of Na(+) ions from the cytoplasm to the periplasm. NqrA to NqrE are probably involved in the second step, the conversion of ubisemiquinone to ubiquinol. The polypeptide is Na(+)-translocating NADH-quinone reductase subunit A (Haemophilus influenzae (strain 86-028NP)).